A 917-amino-acid chain; its full sequence is Hexokinase-2 (917 aa).

An N-acetylmethionine modification is found at M1. Residues 1–16 (MIASHLLAYFFTELNH) are mitochondrial-binding peptide (MBP). Hexokinase domains follow at residues 16–458 (HDQV…MVTA) and 464–906 (AYQH…LITA). Residues R30 and 84-89 (DLGGTN) each bind ATP. Positions 73–207 (DGTEHGEFLA…DFDIDIVAMV (135 aa)) are hexokinase small subdomain 1. Residue 84-88 (DLGGT) participates in D-glucose 6-phosphate binding. D-glucose-binding positions include 155–156 (SF), 172–173 (TK), 208–209 (ND), N235, E260, and 291–294 (QLFE). A hexokinase large subdomain 1 region spans residues 208–447 (NDTVATMMTC…CDIRFLCSED (240 aa)). D209 serves as a coordination point for D-glucose 6-phosphate. A D-glucose 6-phosphate-binding site is contributed by 413–415 (DGS). 425–426 (KR) contacts ATP. Residues S449 and 532-536 (DLGGT) each bind D-glucose 6-phosphate. The segment at 521 to 655 (DGTEKGDFLA…EFDLDVVAVV (135 aa)) is hexokinase small subdomain 2. Residue 532–537 (DLGGTN) coordinates ATP. D-glucose contacts are provided by residues 603 to 604 (SF), 620 to 621 (TK), and 656 to 657 (ND). The tract at residues 656–895 (NDTVGTMMTC…CDVSFLESED (240 aa)) is hexokinase large subdomain 2. D-glucose 6-phosphate contacts are provided by D657 and T680. An ATP-binding site is contributed by T680. D-glucose is bound by residues 682-683 (SN), E708, and 739-742 (QRFE). Residues 747-748 (GM), 784-788 (TKFLS), and 863-867 (TLYKL) each bind ATP. Residues 861–863 (DGT) and S897 contribute to the D-glucose 6-phosphate site.

This sequence belongs to the hexokinase family. In terms of assembly, monomer. Interacts with TIGAR; the interaction increases hexokinase activity in a hypoxia- and HIF1A-dependent manner.

Its subcellular location is the mitochondrion outer membrane. It localises to the cytoplasm. It is found in the cytosol. The enzyme catalyses a D-hexose + ATP = a D-hexose 6-phosphate + ADP + H(+). It carries out the reaction D-fructose + ATP = D-fructose 6-phosphate + ADP + H(+). It catalyses the reaction D-glucose + ATP = D-glucose 6-phosphate + ADP + H(+). The protein operates within carbohydrate metabolism; hexose metabolism. It functions in the pathway carbohydrate degradation; glycolysis; D-glyceraldehyde 3-phosphate and glycerone phosphate from D-glucose: step 1/4. With respect to regulation, hexokinase activity is specifically inhibited by 2,6-disubstituted glucosamines. In terms of biological role, catalyzes the phosphorylation of hexose, such as D-glucose and D-fructose, to hexose 6-phosphate (D-glucose 6-phosphate and D-fructose 6-phosphate, respectively). Mediates the initial step of glycolysis by catalyzing phosphorylation of D-glucose to D-glucose 6-phosphate. Plays a key role in maintaining the integrity of the outer mitochondrial membrane by preventing the release of apoptogenic molecules from the intermembrane space and subsequent apoptosis. The protein is Hexokinase-2 of Equus zebra (Mountain zebra).